The chain runs to 371 residues: Maltose/maltodextrin import ATP-binding protein MalK (371 aa).

Residues 4 to 234 (VQLQNVTKAW…PADRFVAGFI (231 aa)) enclose the ABC transporter domain. Residue 36–43 (GPSGCGKS) participates in ATP binding.

This sequence belongs to the ABC transporter superfamily. Maltooligosaccharide importer (TC 3.A.1.1.1) family. In terms of assembly, the complex is composed of two ATP-binding proteins (MalK), two transmembrane proteins (MalG and MalK) and a solute-binding protein (MalE).

The protein localises to the cell inner membrane. It carries out the reaction D-maltose(out) + ATP + H2O = D-maltose(in) + ADP + phosphate + H(+). Its function is as follows. Part of the ABC transporter complex MalEFGK involved in maltose/maltodextrin import. Responsible for energy coupling to the transport system. In Shigella flexneri serotype 5b (strain 8401), this protein is Maltose/maltodextrin import ATP-binding protein MalK.